Here is a 66-residue protein sequence, read N- to C-terminus: Small ribosomal subunit protein eS27 (66 aa).

Zn(2+) contacts are provided by cysteine 21, cysteine 24, cysteine 40, and cysteine 43. The C4-type zinc-finger motif lies at 21-43 (CPNCGNEQTIFSHATFPVRCLSC).

Belongs to the eukaryotic ribosomal protein eS27 family. Part of the 30S ribosomal subunit. It depends on Zn(2+) as a cofactor.

The polypeptide is Small ribosomal subunit protein eS27 (Saccharolobus solfataricus (strain ATCC 35092 / DSM 1617 / JCM 11322 / P2) (Sulfolobus solfataricus)).